A 301-amino-acid chain; its full sequence is Cell division control protein 2 homolog 1 (301 aa).

The Protein kinase domain occupies 5–297; sequence YQRLEKIGEG…AAQALEHPYF (293 aa). ATP-binding positions include 11 to 19 and K34; that span reads IGEGSYGVV. At S15 the chain carries Phosphoserine. At Y16 the chain carries Phosphotyrosine. D127 acts as the Proton acceptor in catalysis. T160 is subject to Phosphothreonine; by CAK.

The protein belongs to the protein kinase superfamily. CMGC Ser/Thr protein kinase family. CDC2/CDKX subfamily. As to quaternary structure, forms a stable but non-covalent complex with a regulatory subunit and with a cyclin.

It catalyses the reaction L-seryl-[protein] + ATP = O-phospho-L-seryl-[protein] + ADP + H(+). It carries out the reaction L-threonyl-[protein] + ATP = O-phospho-L-threonyl-[protein] + ADP + H(+). Its activity is regulated as follows. Phosphorylation at Ser-15 or Tyr-16 inactivates the enzyme, while phosphorylation at Thr-160 activates it. Probably involved in the control of the cell cycle. The chain is Cell division control protein 2 homolog 1 (CRK1) from Trypanosoma congolense.